Reading from the N-terminus, the 575-residue chain is Proline--tRNA ligase (575 aa).

Belongs to the class-II aminoacyl-tRNA synthetase family. ProS type 1 subfamily. In terms of assembly, homodimer.

Its subcellular location is the cytoplasm. The catalysed reaction is tRNA(Pro) + L-proline + ATP = L-prolyl-tRNA(Pro) + AMP + diphosphate. Functionally, catalyzes the attachment of proline to tRNA(Pro) in a two-step reaction: proline is first activated by ATP to form Pro-AMP and then transferred to the acceptor end of tRNA(Pro). As ProRS can inadvertently accommodate and process non-cognate amino acids such as alanine and cysteine, to avoid such errors it has two additional distinct editing activities against alanine. One activity is designated as 'pretransfer' editing and involves the tRNA(Pro)-independent hydrolysis of activated Ala-AMP. The other activity is designated 'posttransfer' editing and involves deacylation of mischarged Ala-tRNA(Pro). The misacylated Cys-tRNA(Pro) is not edited by ProRS. This is Proline--tRNA ligase from Solidesulfovibrio magneticus (strain ATCC 700980 / DSM 13731 / RS-1) (Desulfovibrio magneticus).